A 70-amino-acid chain; its full sequence is Protein SlyX homolog (70 aa).

It belongs to the SlyX family.

In Shewanella frigidimarina (strain NCIMB 400), this protein is Protein SlyX homolog.